A 307-amino-acid polypeptide reads, in one-letter code: Protoheme IX farnesyltransferase (307 aa).

Helical transmembrane passes span 28–48 (LVIF…NPIL), 50–70 (FTAI…NQWW), 99–117 (FGIL…AINW), 121–138 (IILA…TIWL), 146–166 (IVIG…AVTG), 173–193 (VLLF…LALF), 219–239 (ILVY…IGAT), 241–261 (AIYG…SVPV), and 278–298 (LFGF…ADRY).

The protein belongs to the UbiA prenyltransferase family. Protoheme IX farnesyltransferase subfamily.

It is found in the cell inner membrane. It carries out the reaction heme b + (2E,6E)-farnesyl diphosphate + H2O = Fe(II)-heme o + diphosphate. The protein operates within porphyrin-containing compound metabolism; heme O biosynthesis; heme O from protoheme: step 1/1. Functionally, converts heme B (protoheme IX) to heme O by substitution of the vinyl group on carbon 2 of heme B porphyrin ring with a hydroxyethyl farnesyl side group. The protein is Protoheme IX farnesyltransferase of Erythrobacter litoralis (strain HTCC2594).